We begin with the raw amino-acid sequence, 147 residues long: Spermidine export protein MdtJ (147 aa).

Transmembrane regions (helical) follow at residues 1 to 21, 31 to 51, 54 to 74, and 81 to 101; these read MIYW…TLSM, TGHI…SLAV, VALG…ITIF, and ETLS…ILLV. The disordered stretch occupies residues 105-147; sequence TRKPKQPNCHRGNRPPSVQELKTQTTGHHKGVAVESGEHHAAA.

The protein belongs to the drug/metabolite transporter (DMT) superfamily. Small multidrug resistance (SMR) (TC 2.A.7.1) family. MdtJ subfamily. In terms of assembly, forms a complex with MdtI.

The protein localises to the cell inner membrane. Catalyzes the excretion of spermidine. The sequence is that of Spermidine export protein MdtJ from Yersinia pestis bv. Antiqua (strain Antiqua).